The sequence spans 89 residues: Putative regulatory protein BPUM_1466 (89 aa).

This sequence belongs to the RemA family.

This chain is Putative regulatory protein BPUM_1466, found in Bacillus pumilus (strain SAFR-032).